The chain runs to 704 residues: Elongation factor G 1 (704 aa).

Residues glutamate 8–alanine 291 enclose the tr-type G domain. GTP contacts are provided by residues alanine 17–threonine 24, aspartate 88–histidine 92, and asparagine 142–aspartate 145.

It belongs to the TRAFAC class translation factor GTPase superfamily. Classic translation factor GTPase family. EF-G/EF-2 subfamily.

Its subcellular location is the cytoplasm. Functionally, catalyzes the GTP-dependent ribosomal translocation step during translation elongation. During this step, the ribosome changes from the pre-translocational (PRE) to the post-translocational (POST) state as the newly formed A-site-bound peptidyl-tRNA and P-site-bound deacylated tRNA move to the P and E sites, respectively. Catalyzes the coordinated movement of the two tRNA molecules, the mRNA and conformational changes in the ribosome. The protein is Elongation factor G 1 of Burkholderia mallei (strain ATCC 23344).